The sequence spans 362 residues: N5-carboxyaminoimidazole ribonucleotide synthase (362 aa).

Residues Arg85, Lys125, 130–136 (GYDGRGQ), 158–161 (EKFI), Glu166, and 244–245 (NE) each bind ATP. The region spanning 89–274 (KSLLDELNLS…QFELHLRALL (186 aa)) is the ATP-grasp domain.

This sequence belongs to the PurK/PurT family. In terms of assembly, homodimer.

The enzyme catalyses 5-amino-1-(5-phospho-beta-D-ribosyl)imidazole + hydrogencarbonate + ATP = 5-carboxyamino-1-(5-phospho-D-ribosyl)imidazole + ADP + phosphate + 2 H(+). The protein operates within purine metabolism; IMP biosynthesis via de novo pathway; 5-amino-1-(5-phospho-D-ribosyl)imidazole-4-carboxylate from 5-amino-1-(5-phospho-D-ribosyl)imidazole (N5-CAIR route): step 1/2. Catalyzes the ATP-dependent conversion of 5-aminoimidazole ribonucleotide (AIR) and HCO(3)(-) to N5-carboxyaminoimidazole ribonucleotide (N5-CAIR). The protein is N5-carboxyaminoimidazole ribonucleotide synthase of Haemophilus influenzae (strain ATCC 51907 / DSM 11121 / KW20 / Rd).